The sequence spans 413 residues: Tyrosine--tRNA ligase (413 aa).

Position 34 (Y34) interacts with L-tyrosine. Residues C39 to N48 carry the 'HIGH' region motif. L-tyrosine contacts are provided by Y171 and Q175. The 'KMSKS' region motif lies at K231–T235. K234 contributes to the ATP binding site. The 66-residue stretch at I346–I411 folds into the S4 RNA-binding domain.

It belongs to the class-I aminoacyl-tRNA synthetase family. TyrS type 1 subfamily. In terms of assembly, homodimer.

It localises to the cytoplasm. It catalyses the reaction tRNA(Tyr) + L-tyrosine + ATP = L-tyrosyl-tRNA(Tyr) + AMP + diphosphate + H(+). Its function is as follows. Catalyzes the attachment of tyrosine to tRNA(Tyr) in a two-step reaction: tyrosine is first activated by ATP to form Tyr-AMP and then transferred to the acceptor end of tRNA(Tyr). The protein is Tyrosine--tRNA ligase of Orientia tsutsugamushi (strain Ikeda) (Rickettsia tsutsugamushi).